A 429-amino-acid chain; its full sequence is Enolase (429 aa).

Position 162 (Q162) interacts with (2R)-2-phosphoglycerate. Catalysis depends on E204, which acts as the Proton donor. Residues D241, E283, and D310 each coordinate Mg(2+). (2R)-2-phosphoglycerate is bound by residues K335, R364, S365, and K386. Residue K335 is the Proton acceptor of the active site.

This sequence belongs to the enolase family. The cofactor is Mg(2+).

It is found in the cytoplasm. Its subcellular location is the secreted. The protein resides in the cell surface. It carries out the reaction (2R)-2-phosphoglycerate = phosphoenolpyruvate + H2O. It functions in the pathway carbohydrate degradation; glycolysis; pyruvate from D-glyceraldehyde 3-phosphate: step 4/5. Catalyzes the reversible conversion of 2-phosphoglycerate (2-PG) into phosphoenolpyruvate (PEP). It is essential for the degradation of carbohydrates via glycolysis. This is Enolase from Mycolicibacterium vanbaalenii (strain DSM 7251 / JCM 13017 / BCRC 16820 / KCTC 9966 / NRRL B-24157 / PYR-1) (Mycobacterium vanbaalenii).